We begin with the raw amino-acid sequence, 156 residues long: Class I hydrophobin B (156 aa).

Positions 1 to 18 are cleaved as a signal peptide; it reads MQFTLSAVVLALAGFSAA. 4 disulfide bridges follow: Cys52–Cys130, Cys60–Cys124, Cys61–Cys101, and Cys131–Cys149.

It belongs to the fungal hydrophobin family.

The protein localises to the secreted. It localises to the cell wall. In terms of biological role, aerial growth, conidiation, and dispersal of filamentous fungi in the environment rely upon a capability of their secreting small amphipathic proteins called hydrophobins (HPBs) with low sequence identity. Class I can self-assemble into an outermost layer of rodlet bundles on aerial cell surfaces, conferring cellular hydrophobicity that supports fungal growth, development and dispersal; whereas Class II form highly ordered films at water-air interfaces through intermolecular interactions but contribute nothing to the rodlet structure. In P.expansum, hydrophobins contribute to germination, tolerance to cold stress and mycotoxins patulin and citrinin production. HfbA and HfbB are essential for fungal surface hydrophobicity. This is Class I hydrophobin B from Penicillium expansum (Blue mold rot fungus).